The sequence spans 427 residues: Putative acyl-CoA thioester hydrolase YbhC (427 aa).

Residues 1 to 21 (MNTFSVSRLALALAFGVTLTA) form the signal peptide. Cysteine 22 carries N-palmitoyl cysteine lipidation. Cysteine 22 carries S-diacylglycerol cysteine lipidation. A disordered region spans residues 23 to 42 (SSTPPDQRPSDQTAPGTSSR). A disulfide bridge links cysteine 185 with cysteine 197. Aspartate 285 acts as the Nucleophile in catalysis. Arginine 345 provides a ligand contact to substrate.

This sequence belongs to the pectinesterase family.

Its subcellular location is the cell outer membrane. Functionally, putative thioesterase. Does not bind pectin, and has no pectinesterase activity. This Escherichia coli (strain K12) protein is Putative acyl-CoA thioester hydrolase YbhC (ybhC).